A 199-amino-acid chain; its full sequence is Probable NADH dehydrogenase [ubiquinone] iron-sulfur protein 7, mitochondrial (199 aa).

Residues 1–16 (MLSALRTAGALSTRRL) constitute a mitochondrion transit peptide. Residues Cys-74, Cys-75, Cys-139, and Cys-169 each coordinate [4Fe-4S] cluster.

This sequence belongs to the complex I 20 kDa subunit family. Complex I is composed of 45 different subunits This is a component of the iron-sulfur (IP) fragment of the enzyme. It depends on [4Fe-4S] cluster as a cofactor.

The protein localises to the mitochondrion. The enzyme catalyses a ubiquinone + NADH + 5 H(+)(in) = a ubiquinol + NAD(+) + 4 H(+)(out). Functionally, core subunit of the mitochondrial membrane respiratory chain NADH dehydrogenase (Complex I) that is believed to belong to the minimal assembly required for catalysis. Complex I functions in the transfer of electrons from NADH to the respiratory chain. The immediate electron acceptor for the enzyme is believed to be ubiquinone. This chain is Probable NADH dehydrogenase [ubiquinone] iron-sulfur protein 7, mitochondrial, found in Caenorhabditis briggsae.